The primary structure comprises 623 residues: uncharacterized protein (623 aa).

Residues 24 to 51 adopt a coiled-coil conformation; that stretch reads RALVQKDELAQASQDVEDMRDCYDSLLN. Disordered regions lie at residues 148–170, 240–343, 362–393, 454–531, and 585–607; these read TRQR…QQLQ, FSGL…TTPP, ALPT…TKAI, SFSG…LGYS, and KKLG…PQAL. Residues 243–259 are compositionally biased toward acidic residues; that stretch reads LEDDDGDDEIENNENDG. Polar residues predominate over residues 328 to 343; sequence VSQSAPLFPENRTTPP. A compositionally biased stretch (low complexity) spans 364–379; that stretch reads PTPVETTRSPSSTTSP. A compositionally biased stretch (polar residues) spans 384-393; sequence VGSSNPTKAI. Residues 484–495 are compositionally biased toward low complexity; that stretch reads PVSKLPKVSSSP. A compositionally biased stretch (polar residues) spans 496–506; sequence TASPTFVSTPK. Positions 590–606 are enriched in pro residues; sequence PSPPLTPMSLIHPPPQA.

This is an uncharacterized protein from Arabidopsis thaliana (Mouse-ear cress).